The primary structure comprises 106 residues: Large ribosomal subunit protein bL21 (106 aa).

The protein belongs to the bacterial ribosomal protein bL21 family. In terms of assembly, part of the 50S ribosomal subunit. Contacts protein L20.

This protein binds to 23S rRNA in the presence of protein L20. This chain is Large ribosomal subunit protein bL21, found in Xylella fastidiosa (strain 9a5c).